Consider the following 673-residue polypeptide: UvrABC system protein B (673 aa).

Positions 26–183 constitute a Helicase ATP-binding domain; the sequence is EGLEDGLAHQ…RRLAELQYTR (158 aa). An ATP-binding site is contributed by 39-46; the sequence is GVTGSGKT. The short motif at 92 to 115 is the Beta-hairpin element; that stretch reads YYDYYQPEAYVPSSDTFIEKDASV. A Helicase C-terminal domain is found at 431 to 597; sequence QVDDLLSEIR…GLNKKVVDIL (167 aa). The 36-residue stretch at 633–668 folds into the UVR domain; the sequence is QQKIHELEGQMMQHAQNLEFEEAAQIRDQLHQLREL.

It belongs to the UvrB family. As to quaternary structure, forms a heterotetramer with UvrA during the search for lesions. Interacts with UvrC in an incision complex.

It localises to the cytoplasm. The UvrABC repair system catalyzes the recognition and processing of DNA lesions. A damage recognition complex composed of 2 UvrA and 2 UvrB subunits scans DNA for abnormalities. Upon binding of the UvrA(2)B(2) complex to a putative damaged site, the DNA wraps around one UvrB monomer. DNA wrap is dependent on ATP binding by UvrB and probably causes local melting of the DNA helix, facilitating insertion of UvrB beta-hairpin between the DNA strands. Then UvrB probes one DNA strand for the presence of a lesion. If a lesion is found the UvrA subunits dissociate and the UvrB-DNA preincision complex is formed. This complex is subsequently bound by UvrC and the second UvrB is released. If no lesion is found, the DNA wraps around the other UvrB subunit that will check the other stand for damage. This chain is UvrABC system protein B, found in Salmonella heidelberg (strain SL476).